Reading from the N-terminus, the 723-residue chain is Nucleolar protein 11 (723 aa).

The residue at position 346 (Lys-346) is an N6-methyllysine. A disordered region spans residues Phe-549–His-572.

Interacts with UTP4. Interacts with FBL/fibrillarin in a transcription-dependent manner. May associate with the proposed t-UTP subcomplex of the SSU processome containing at least UTP4, WDR43, HEATR1, UTP15, WDR75.

Its subcellular location is the nucleus. The protein resides in the nucleolus. Functionally, ribosome biogenesis factor. May be required for both optimal rDNA transcription and small subunit (SSU) pre-rRNA processing at sites A', A0, 1 and 2b. The sequence is that of Nucleolar protein 11 (Nol11) from Mus musculus (Mouse).